The primary structure comprises 356 residues: Thymidine kinase (356 aa).

The segment at 1 to 29 is disordered; that stretch reads MMDSRATYVPPKKISESNSNAEEDPTDCS. 61–68 contacts ATP; the sequence is GCVGVGKT. Glu86 (proton acceptor) is an active-site residue. Residue Gln122 coordinates substrate. An ATP-binding site is contributed by Arg208. Position 214 (Arg214) interacts with substrate.

It belongs to the herpesviridae thymidine kinase family. Homodimer.

It carries out the reaction thymidine + ATP = dTMP + ADP + H(+). Functionally, catalyzes the transfer of the gamma-phospho group of ATP to thymidine to generate dTMP in the salvage pathway of pyrimidine synthesis. The dTMP serves as a substrate for DNA polymerase during viral DNA replication. Allows the virus to be reactivated and to grow in non-proliferative cells lacking a high concentration of phosphorylated nucleic acid precursors. The sequence is that of Thymidine kinase from Elephas maximus (Indian elephant).